The chain runs to 189 residues: UPF0301 protein CTLon_0458 (189 aa).

It belongs to the UPF0301 (AlgH) family.

This chain is UPF0301 protein CTLon_0458, found in Chlamydia trachomatis serovar L2b (strain UCH-1/proctitis).